The sequence spans 670 residues: Receptor for retinol uptake stra6 (670 aa).

The Extracellular portion of the chain corresponds to 1–38; it reads MSAETVNNYDYSDWYENAAPTKAPVEVIPPCDPTADEG. The helical transmembrane segment at 39–59 threads the bilayer; sequence LFHICIAAISLVVMLVLAILA. Topologically, residues 60–87 are cytoplasmic; that stretch reads RRQKLSDNQRGLTGLLSPVNFLDHTQHK. A helical membrane pass occupies residues 88 to 108; it reads GLAVAVYGVLFCKLVGMVLSH. Topologically, residues 109 to 121 are extracellular; it reads HPLPFTKEVANKE. Residues 122-142 traverse the membrane as a helical segment; it reads FWMILALLYYPALYYPLLACG. Over 143-145 the chain is Cytoplasmic; sequence TLH. The helical transmembrane segment at 146-166 threads the bilayer; that stretch reads NKVGYVLGSLLSWTHFGILVW. Residues 167–182 lie on the Extracellular side of the membrane; it reads QKVDCPKTPQIYKYYA. Residues 183–203 form a helical membrane-spanning segment; the sequence is LFGSLPQIACLAFLSFQYPLL. Topologically, residues 204–274 are cytoplasmic; that stretch reads LFKGLQNTET…PEDVFRFPLK (71 aa). Residues 275–295 form a helical membrane-spanning segment; it reads LAISVVVAFIALYQMALLLIS. The Extracellular portion of the chain corresponds to 296–346; it reads GVLPTLHIVRRGVDENIAFLLAGFNIILSNDRQEVVRIVVYYLWCVEICYV. Residues 347–367 traverse the membrane as a helical segment; that stretch reads SAVTLSCLVNLLMLMRSMVLH. Topologically, residues 368-401 are cytoplasmic; that stretch reads RSNLKGLYRGDSLNVFNCHRSIRPSRPALVCWMG. A helical membrane pass occupies residues 402–422; that stretch reads FTSYQAAFLCLGMAIQTLVFF. The Extracellular portion of the chain corresponds to 423 to 452; it reads ICILFAVFLIIIPILWGTNLMLFHIIGNLW. A helical transmembrane segment spans residues 453 to 473; it reads PFWLTLVLAALIQHVASRFLF. Over 474–488 the chain is Cytoplasmic; the sequence is IRKDGGTRDLNNRGS. Residues 489 to 526 constitute an intramembrane region (helical); the sequence is LFLLSYILFLVNVMIGVVLGIWRVVITALFNIVHLGRL. Over 527–670 the chain is Cytoplasmic; that stretch reads DISLLNRNVE…KEAESAAASN (144 aa). Positions 600 to 626 are interaction with calmodulin; that stretch reads VSNAKRARAHWQLLYTLVNNPSLVGSR. The disordered stretch occupies residues 640-670; that stretch reads GALSRTSKEGSKKDGSVNEPSKEAESAAASN. The span at 645–664 shows a compositional bias: basic and acidic residues; the sequence is TSKEGSKKDGSVNEPSKEAE.

As to quaternary structure, homodimer. Interacts (via C-terminus) with calmodulin.

Its subcellular location is the cell membrane. Its function is as follows. Retinol transporter. Accepts retinol from the extracellular retinol-binding protein rbp4, mediates retinol transport across the cell membrane, and then transmits retinol to the cytoplasmic retinol-binding protein rbp1. Required for normal vitamin A homeostasis. The sequence is that of Receptor for retinol uptake stra6 from Danio rerio (Zebrafish).